The following is a 218-amino-acid chain: NAD(P)H-quinone oxidoreductase subunit I (218 aa).

4Fe-4S ferredoxin-type domains lie at 55–84 (GRIH…VDWV) and 95–124 (RNYS…MTEE). Positions 64, 67, 70, 74, 104, 107, 110, and 114 each coordinate [4Fe-4S] cluster. A disordered region spans residues 169–218 (MDPHELPANQQRAGKLPSQIIKELQAEKSEEKGNNNSSDIVPNKLNSTNK). Residues 192–201 (LQAEKSEEKG) are compositionally biased toward basic and acidic residues. Over residues 202–218 (NNNSSDIVPNKLNSTNK) the composition is skewed to polar residues.

It belongs to the complex I 23 kDa subunit family. NDH-1 is composed of at least 11 different subunits. [4Fe-4S] cluster is required as a cofactor.

The protein localises to the cellular thylakoid membrane. It carries out the reaction a plastoquinone + NADH + (n+1) H(+)(in) = a plastoquinol + NAD(+) + n H(+)(out). It catalyses the reaction a plastoquinone + NADPH + (n+1) H(+)(in) = a plastoquinol + NADP(+) + n H(+)(out). In terms of biological role, NDH-1 shuttles electrons from an unknown electron donor, via FMN and iron-sulfur (Fe-S) centers, to quinones in the respiratory and/or the photosynthetic chain. The immediate electron acceptor for the enzyme in this species is believed to be plastoquinone. Couples the redox reaction to proton translocation, and thus conserves the redox energy in a proton gradient. The polypeptide is NAD(P)H-quinone oxidoreductase subunit I (Prochlorococcus marinus (strain NATL1A)).